A 312-amino-acid chain; its full sequence is 4-diphosphocytidyl-2-C-methyl-D-erythritol kinase (312 aa).

Residue lysine 16 is part of the active site. An ATP-binding site is contributed by 101-111 (PIGAGLAGGSS). The active site involves aspartate 143.

This sequence belongs to the GHMP kinase family. IspE subfamily.

It carries out the reaction 4-CDP-2-C-methyl-D-erythritol + ATP = 4-CDP-2-C-methyl-D-erythritol 2-phosphate + ADP + H(+). It functions in the pathway isoprenoid biosynthesis; isopentenyl diphosphate biosynthesis via DXP pathway; isopentenyl diphosphate from 1-deoxy-D-xylulose 5-phosphate: step 3/6. Functionally, catalyzes the phosphorylation of the position 2 hydroxy group of 4-diphosphocytidyl-2C-methyl-D-erythritol. The chain is 4-diphosphocytidyl-2-C-methyl-D-erythritol kinase from Prochlorococcus marinus subsp. pastoris (strain CCMP1986 / NIES-2087 / MED4).